The following is a 286-amino-acid chain: 4-hydroxybenzoate octaprenyltransferase (286 aa).

The next 7 helical transmembrane spans lie at 20–40 (IGTLLLMWPCLMALVLAAGGM), 43–63 (LKVLVIFIIGVVVMRACGCII), 96–116 (LFVVMGLIAFGLVLMLNPLVV), 142–162 (FLGVVWSWSIPMAYAAQTGTV), 167–187 (WWLFAANWCWTVAYDTMYAMV), 210–230 (QVIALFQLAALACFIIAGWAA), and 234–254 (LVYALGIITFVGFSLYQQKLI).

This sequence belongs to the UbiA prenyltransferase family. Mg(2+) is required as a cofactor.

The protein resides in the cell inner membrane. It carries out the reaction all-trans-octaprenyl diphosphate + 4-hydroxybenzoate = 4-hydroxy-3-(all-trans-octaprenyl)benzoate + diphosphate. It participates in cofactor biosynthesis; ubiquinone biosynthesis. Its function is as follows. Catalyzes the prenylation of para-hydroxybenzoate (PHB) with an all-trans polyprenyl group. Mediates the second step in the final reaction sequence of ubiquinone-8 (UQ-8) biosynthesis, which is the condensation of the polyisoprenoid side chain with PHB, generating the first membrane-bound Q intermediate 3-octaprenyl-4-hydroxybenzoate. This chain is 4-hydroxybenzoate octaprenyltransferase, found in Shewanella woodyi (strain ATCC 51908 / MS32).